A 472-amino-acid polypeptide reads, in one-letter code: Adenosylhomocysteinase (472 aa).

Residues Thr-61, Asp-136, and Glu-196 each coordinate substrate. Residue Thr-197 to Thr-199 coordinates NAD(+). Substrate is bound by residues Lys-226 and Asp-230. Residues Asn-231, Gly-260–Gly-265, Glu-283, Asn-318, Ile-339–His-341, and Asn-384 contribute to the NAD(+) site.

Belongs to the adenosylhomocysteinase family. NAD(+) is required as a cofactor.

The protein localises to the cytoplasm. It catalyses the reaction S-adenosyl-L-homocysteine + H2O = L-homocysteine + adenosine. Its pathway is amino-acid biosynthesis; L-homocysteine biosynthesis; L-homocysteine from S-adenosyl-L-homocysteine: step 1/1. Its function is as follows. May play a key role in the regulation of the intracellular concentration of adenosylhomocysteine. This is Adenosylhomocysteinase from Cupriavidus pinatubonensis (strain JMP 134 / LMG 1197) (Cupriavidus necator (strain JMP 134)).